The following is a 485-amino-acid chain: D-alanine--D-alanyl carrier protein ligase (485 aa).

ATP is bound at residue 144–145; the sequence is TS. Asp-189 contributes to the D-alanine binding site. Residue 284–289 participates in ATP binding; sequence NTYGPT. Residue Val-293 participates in D-alanine binding. Asp-365 and Lys-473 together coordinate ATP. D-alanine is bound at residue Lys-473.

The protein belongs to the ATP-dependent AMP-binding enzyme family. DltA subfamily.

It is found in the cytoplasm. It carries out the reaction holo-[D-alanyl-carrier protein] + D-alanine + ATP = D-alanyl-[D-alanyl-carrier protein] + AMP + diphosphate. It functions in the pathway cell wall biogenesis; lipoteichoic acid biosynthesis. In terms of biological role, catalyzes the first step in the D-alanylation of lipoteichoic acid (LTA), the activation of D-alanine and its transfer onto the D-alanyl carrier protein (Dcp) DltC. In an ATP-dependent two-step reaction, forms a high energy D-alanyl-AMP intermediate, followed by transfer of the D-alanyl residue as a thiol ester to the phosphopantheinyl prosthetic group of the Dcp. D-alanylation of LTA plays an important role in modulating the properties of the cell wall in Gram-positive bacteria, influencing the net charge of the cell wall. In Staphylococcus aureus (strain bovine RF122 / ET3-1), this protein is D-alanine--D-alanyl carrier protein ligase.